Reading from the N-terminus, the 735-residue chain is Peroxisomal multifunctional enzyme type 2 (735 aa).

Residues 1 to 305 (MASPLRFDGR…IEVLHKIDSE (305 aa)) form a (3R)-hydroxyacyl-CoA dehydrogenase region. NAD(+) is bound by residues 16–40 (GAGG…VVND), Leu21, and Asp40. Position 46 is an N6-acetyllysine; alternate (Lys46). Lys46 is subject to N6-succinyllysine; alternate. Ser52 carries the phosphoserine modification. 2 positions are modified to N6-succinyllysine: Lys57 and Lys68. 75-76 (SV) lines the NAD(+) pocket. At Lys84 the chain carries N6-succinyllysine. Asn99 contacts NAD(+). Ser151 provides a ligand contact to substrate. Tyr164 acts as the Proton acceptor in catalysis. Residues 164 to 168 (YSAAK) and 196 to 199 (AGSR) each bind NAD(+). Thr265 carries the post-translational modification Phosphothreonine. N6-succinyllysine is present on Lys275. Phosphoserine is present on residues Ser304 and Ser308. The interval 321–621 (SGFAGVVGHK…AQTPSEGGAL (301 aa)) is enoyl-CoA hydratase 2. An N6-succinyllysine modification is found at Lys355. (3R)-3-hydroxydecanoyl-CoA is bound at residue 405–406 (HG). Lys423 carries the N6-succinyllysine modification. Residues Lys434, 509 to 514 (DSNPLH), Gly532, and Phe562 contribute to the (3R)-3-hydroxydecanoyl-CoA site. Positions 483 to 599 (VPSRPPDAVL…QETGDIVISN (117 aa)) constitute a MaoC-like domain. Lys564 is modified (N6-acetyllysine). An N6-succinyllysine mark is found at Lys578 and Lys662. In terms of domain architecture, SCP2 spans 623–735 (SALVFGEIGR…QMILKDYAKL (113 aa)). N6-acetyllysine is present on Lys668. Gln705 and Gln723 together coordinate substrate. N6-succinyllysine is present on Lys724. A Microbody targeting signal motif is present at residues 733 to 735 (AKL).

This sequence belongs to the short-chain dehydrogenases/reductases (SDR) family. In terms of assembly, homodimer.

It is found in the peroxisome. The enzyme catalyses a (3R)-3-hydroxyacyl-CoA + NAD(+) = a 3-oxoacyl-CoA + NADH + H(+). The catalysed reaction is (24R,25R)-3alpha,7alpha,12alpha,24-tetrahydroxy-5beta-cholestan-26-oyl-CoA = (24E)-3alpha,7alpha,12alpha-trihydroxy-5beta-cholest-24-en-26-oyl-CoA + H2O. It catalyses the reaction a (3R)-3-hydroxyacyl-CoA = a (2E)-enoyl-CoA + H2O. It carries out the reaction (2E)-octenoyl-CoA + H2O = (3R)-hydroxyoctanoyl-CoA. The enzyme catalyses (3R)-hydroxyoctanoyl-CoA + NAD(+) = 3-oxooctanoyl-CoA + NADH + H(+). The catalysed reaction is (3R)-hydroxyhexadecanoyl-CoA + NAD(+) = 3-oxohexadecanoyl-CoA + NADH + H(+). It catalyses the reaction (2E)-hexadecenedioyl-CoA + H2O = (3R)-hydroxyhexadecanedioyl-CoA. It carries out the reaction (3R)-hydroxyhexadecanedioyl-CoA + NAD(+) = 3-oxohexadecanedioyl-CoA + NADH + H(+). The enzyme catalyses (3R)-hydroxyhexadecanoyl-CoA = (2E)-hexadecenoyl-CoA + H2O. The catalysed reaction is (3R)-3-hydroxydecanoyl-CoA = (2E)-decenoyl-CoA + H2O. It catalyses the reaction (3R)-3-hydroxydecanoyl-CoA + NAD(+) = 3-oxodecanoyl-CoA + NADH + H(+). It carries out the reaction (24R,25R)-3alpha,7alpha,12alpha,24-tetrahydroxy-5beta-cholestan-26-oyl-CoA + NAD(+) = 3alpha,7alpha,12alpha-trihydroxy-24-oxo-5beta-cholestan-26-oyl-CoA + NADH + H(+). It functions in the pathway lipid metabolism; fatty acid beta-oxidation. Functionally, bifunctional enzyme acting on the peroxisomal fatty acid beta-oxidation pathway. Catalyzes two of the four reactions in fatty acid degradation: hydration of 2-enoyl-CoA (trans-2-enoyl-CoA) to produce (3R)-3-hydroxyacyl-CoA, and dehydrogenation of (3R)-3-hydroxyacyl-CoA to produce 3-ketoacyl-CoA (3-oxoacyl-CoA), which is further metabolized by SCPx. Can use straight-chain and branched-chain fatty acids, as well as bile acid intermediates as substrates. This is Peroxisomal multifunctional enzyme type 2 from Rattus norvegicus (Rat).